An 860-amino-acid polypeptide reads, in one-letter code: Leucine--tRNA ligase (860 aa).

The 'HIGH' region motif lies at 42–52; the sequence is PYPSGRLHMGH. The 'KMSKS' region signature appears at 619–623; it reads KMSKS. K622 is an ATP binding site.

This sequence belongs to the class-I aminoacyl-tRNA synthetase family.

The protein resides in the cytoplasm. The catalysed reaction is tRNA(Leu) + L-leucine + ATP = L-leucyl-tRNA(Leu) + AMP + diphosphate. The protein is Leucine--tRNA ligase of Salmonella agona (strain SL483).